The chain runs to 572 residues: Probable catabolite repression protein creC (572 aa).

Positions 36-61 are disordered; sequence HLATPPPHPSEAPVVNPNPLATVPTP. WD repeat units lie at residues 226 to 266, 306 to 347, 348 to 387, and 390 to 434; these read VSNS…ALFT, LANQ…DIFR, SYYG…IVAR, and GHNS…LHRP. Disordered regions lie at residues 458-486 and 541-572; these read HRAD…SAVR and NDSY…MGSL. Residues 506–543 form a WD 5 repeat; that stretch reads VGDDPICWLGFQEDSIMTSSLEGHIRTWDRPREGINDS. Residues 549–572 show a composition bias toward low complexity; it reads SSPAISTSAAGSGSGIADSAMGSL.

It belongs to the WD repeat creC family. In terms of assembly, interacts with creB.

In terms of biological role, component of the regulatory network controlling carbon source utilization through ubiquitination and deubiquitination involving creA, creB, creC, creD and acrB. Required to prevent the proteolysis of the CreB deubiquitinating enzyme in the absence of carbon catabolite repression. CreB deubiquitinating enzyme stabilized in a complex with the CreC leads to the expression of genes such as those in the proline and quinate pathways. The protein is Probable catabolite repression protein creC (creC) of Aspergillus flavus (strain ATCC 200026 / FGSC A1120 / IAM 13836 / NRRL 3357 / JCM 12722 / SRRC 167).